Reading from the N-terminus, the 172-residue chain is Small ribosomal subunit protein uS5 (172 aa).

The S5 DRBM domain maps to L17–V80.

The protein belongs to the universal ribosomal protein uS5 family. In terms of assembly, part of the 30S ribosomal subunit. Contacts proteins S4 and S8.

With S4 and S12 plays an important role in translational accuracy. Functionally, located at the back of the 30S subunit body where it stabilizes the conformation of the head with respect to the body. This chain is Small ribosomal subunit protein uS5, found in Burkholderia thailandensis (strain ATCC 700388 / DSM 13276 / CCUG 48851 / CIP 106301 / E264).